The chain runs to 175 residues: D-glycero-beta-D-manno-heptose-1,7-bisphosphate 7-phosphatase (175 aa).

Aspartate 7 serves as the catalytic Nucleophile. Mg(2+) contacts are provided by aspartate 7 and aspartate 9. Substrate contacts are provided by residues 7–9 (DRD), 15–19 (DSDAY), and 50–53 (TNQS). Catalysis depends on aspartate 9, which acts as the Proton donor. Residues cysteine 89, histidine 91, cysteine 97, and cysteine 99 each coordinate Zn(2+). Position 100–101 (100–101 (RK)) interacts with substrate. Aspartate 126 lines the Mg(2+) pocket.

This sequence belongs to the gmhB family. Monomer. Requires Mg(2+) as cofactor. It depends on Zn(2+) as a cofactor.

The protein localises to the cytoplasm. It carries out the reaction D-glycero-beta-D-manno-heptose 1,7-bisphosphate + H2O = D-glycero-beta-D-manno-heptose 1-phosphate + phosphate. It functions in the pathway nucleotide-sugar biosynthesis; ADP-L-glycero-beta-D-manno-heptose biosynthesis; ADP-L-glycero-beta-D-manno-heptose from D-glycero-beta-D-manno-heptose 7-phosphate: step 2/4. It participates in bacterial outer membrane biogenesis; LPS core biosynthesis. Functionally, converts the D-glycero-beta-D-manno-heptose 1,7-bisphosphate (beta-HBP) intermediate into D-glycero-beta-D-manno-heptose 1-phosphate by removing the phosphate group at the C-7 position. The chain is D-glycero-beta-D-manno-heptose-1,7-bisphosphate 7-phosphatase from Pseudomonas putida (strain ATCC 47054 / DSM 6125 / CFBP 8728 / NCIMB 11950 / KT2440).